Reading from the N-terminus, the 334-residue chain is Mediator of RNA polymerase II transcription subunit 4 (334 aa).

Residues 71–100 (QEREQLIRTLEAHVEKRDEVIQQLETNLKS) adopt a coiled-coil conformation. The disordered stretch occupies residues 193–334 (PLITSPSASS…ASKKTGSSNK (142 aa)). Composition is skewed to polar residues over residues 194-206 (LITS…SNGG) and 251-282 (NEKQ…SSPN).

The protein belongs to the Mediator complex subunit 4 family. In terms of assembly, component of the Mediator complex.

The protein resides in the nucleus. In terms of biological role, component of the Mediator complex, a coactivator involved in the regulated transcription of nearly all RNA polymerase II-dependent genes. Mediator functions as a bridge to convey information from gene-specific regulatory proteins to the basal RNA polymerase II transcription machinery. Mediator is recruited to promoters by direct interactions with regulatory proteins and serves as a scaffold for the assembly of a functional preinitiation complex with RNA polymerase II and the general transcription factors. This Caenorhabditis elegans protein is Mediator of RNA polymerase II transcription subunit 4 (mdt-4).